The primary structure comprises 577 residues: Arginine--tRNA ligase (577 aa).

Residues 122–132 (PNVAKEMHVGH) carry the 'HIGH' region motif.

The protein belongs to the class-I aminoacyl-tRNA synthetase family. Monomer.

The protein resides in the cytoplasm. The enzyme catalyses tRNA(Arg) + L-arginine + ATP = L-arginyl-tRNA(Arg) + AMP + diphosphate. This is Arginine--tRNA ligase from Klebsiella pneumoniae (strain 342).